Consider the following 341-residue polypeptide: Glycerol-3-phosphate dehydrogenase [NAD(P)+] (341 aa).

NADPH is bound by residues Ser14, Phe15, Arg35, and Lys108. Lys108 and Gly136 together coordinate sn-glycerol 3-phosphate. Ser140 contacts NADPH. Sn-glycerol 3-phosphate contacts are provided by Lys191, Asp244, Ser254, Arg255, and Asn256. The active-site Proton acceptor is Lys191. Residue Arg255 participates in NADPH binding. 2 residues coordinate NADPH: Val279 and Glu281.

Belongs to the NAD-dependent glycerol-3-phosphate dehydrogenase family.

Its subcellular location is the cytoplasm. The enzyme catalyses sn-glycerol 3-phosphate + NAD(+) = dihydroxyacetone phosphate + NADH + H(+). It catalyses the reaction sn-glycerol 3-phosphate + NADP(+) = dihydroxyacetone phosphate + NADPH + H(+). The protein operates within membrane lipid metabolism; glycerophospholipid metabolism. Catalyzes the reduction of the glycolytic intermediate dihydroxyacetone phosphate (DHAP) to sn-glycerol 3-phosphate (G3P), the key precursor for phospholipid synthesis. The chain is Glycerol-3-phosphate dehydrogenase [NAD(P)+] from Pseudomonas putida (strain GB-1).